The following is a 169-amino-acid chain: Large ribosomal subunit protein bL19m (169 aa).

Residues 1–16 constitute a mitochondrion transit peptide; it reads MWSRNVRLLGSWTRSY.

It belongs to the bacterial ribosomal protein bL19 family. As to quaternary structure, component of the mitochondrial large ribosomal subunit (mt-LSU). Mature yeast 74S mitochondrial ribosomes consist of a small (37S) and a large (54S) subunit. The 37S small subunit contains a 15S ribosomal RNA (15S mt-rRNA) and 34 different proteins. The 54S large subunit contains a 21S rRNA (21S mt-rRNA) and 46 different proteins.

The protein localises to the mitochondrion. Functionally, component of the mitochondrial ribosome (mitoribosome), a dedicated translation machinery responsible for the synthesis of mitochondrial genome-encoded proteins, including at least some of the essential transmembrane subunits of the mitochondrial respiratory chain. The mitoribosomes are attached to the mitochondrial inner membrane and translation products are cotranslationally integrated into the membrane. bL19m is essential for respiration. The protein is Large ribosomal subunit protein bL19m (IMG1) of Saccharomyces cerevisiae (strain ATCC 204508 / S288c) (Baker's yeast).